We begin with the raw amino-acid sequence, 138 residues long: Large ribosomal subunit protein uL16 (138 aa).

Basic residues predominate over residues 1 to 13 (MLQPSRRKYRKEQ). A disordered region spans residues 1–24 (MLQPSRRKYRKEQKGRNTGLASRG).

Belongs to the universal ribosomal protein uL16 family. Part of the 50S ribosomal subunit.

Functionally, binds 23S rRNA and is also seen to make contacts with the A and possibly P site tRNAs. The polypeptide is Large ribosomal subunit protein uL16 (Bordetella bronchiseptica (strain ATCC BAA-588 / NCTC 13252 / RB50) (Alcaligenes bronchisepticus)).